The chain runs to 678 residues: DNA ligase (678 aa).

NAD(+) is bound by residues 36-40 (DSEFD), 85-86 (SL), and Glu117. The N6-AMP-lysine intermediate role is filled by Lys119. NAD(+) is bound by residues Arg140, Glu177, Lys294, and Lys318. Residues Cys412, Cys415, Cys430, and Cys436 each coordinate Zn(2+). Positions 595–678 (IIDAPLLGKT…TWWQHYGNAV (84 aa)) constitute a BRCT domain.

It belongs to the NAD-dependent DNA ligase family. LigA subfamily. Mg(2+) is required as a cofactor. Mn(2+) serves as cofactor.

The catalysed reaction is NAD(+) + (deoxyribonucleotide)n-3'-hydroxyl + 5'-phospho-(deoxyribonucleotide)m = (deoxyribonucleotide)n+m + AMP + beta-nicotinamide D-nucleotide.. In terms of biological role, DNA ligase that catalyzes the formation of phosphodiester linkages between 5'-phosphoryl and 3'-hydroxyl groups in double-stranded DNA using NAD as a coenzyme and as the energy source for the reaction. It is essential for DNA replication and repair of damaged DNA. This is DNA ligase from Dichelobacter nodosus (strain VCS1703A).